A 302-amino-acid chain; its full sequence is Phosphoribosylaminoimidazole-succinocarboxamide synthase (302 aa).

This sequence belongs to the SAICAR synthetase family.

It catalyses the reaction 5-amino-1-(5-phospho-D-ribosyl)imidazole-4-carboxylate + L-aspartate + ATP = (2S)-2-[5-amino-1-(5-phospho-beta-D-ribosyl)imidazole-4-carboxamido]succinate + ADP + phosphate + 2 H(+). It functions in the pathway purine metabolism; IMP biosynthesis via de novo pathway; 5-amino-1-(5-phospho-D-ribosyl)imidazole-4-carboxamide from 5-amino-1-(5-phospho-D-ribosyl)imidazole-4-carboxylate: step 1/2. The chain is Phosphoribosylaminoimidazole-succinocarboxamide synthase from Leptothrix cholodnii (strain ATCC 51168 / LMG 8142 / SP-6) (Leptothrix discophora (strain SP-6)).